Reading from the N-terminus, the 353-residue chain is Photosystem II protein D1 (353 aa).

At threonine 2 the chain carries N-acetylthreonine. Position 2 is a phosphothreonine (threonine 2). 3 helical membrane-spanning segments follow: residues 29 to 46 (YIGW…TATS), 118 to 133 (HFLL…EWEL), and 142 to 156 (WIAV…AATA). Residue histidine 118 participates in chlorophyll a binding. Residue tyrosine 126 participates in pheophytin a binding. Residues aspartate 170 and glutamate 189 each coordinate [CaMn4O5] cluster. A helical membrane pass occupies residues 197–218 (FHMLGVAGVFGGSLFSAMHGSL). Residue histidine 198 participates in chlorophyll a binding. Residues histidine 215 and 264–265 (SF) contribute to the a quinone site. Histidine 215 serves as a coordination point for Fe cation. Histidine 272 is a binding site for Fe cation. Residues 274 to 288 (FLAAWPVVGIWFTAL) traverse the membrane as a helical segment. [CaMn4O5] cluster-binding residues include histidine 332, glutamate 333, aspartate 342, and alanine 344. Positions 345–353 (AVEVPSING) are excised as a propeptide.

It belongs to the reaction center PufL/M/PsbA/D family. As to quaternary structure, PSII is composed of 1 copy each of membrane proteins PsbA, PsbB, PsbC, PsbD, PsbE, PsbF, PsbH, PsbI, PsbJ, PsbK, PsbL, PsbM, PsbT, PsbX, PsbY, PsbZ, Psb30/Ycf12, at least 3 peripheral proteins of the oxygen-evolving complex and a large number of cofactors. It forms dimeric complexes. The D1/D2 heterodimer binds P680, chlorophylls that are the primary electron donor of PSII, and subsequent electron acceptors. It shares a non-heme iron and each subunit binds pheophytin, quinone, additional chlorophylls, carotenoids and lipids. D1 provides most of the ligands for the Mn4-Ca-O5 cluster of the oxygen-evolving complex (OEC). There is also a Cl(-1) ion associated with D1 and D2, which is required for oxygen evolution. The PSII complex binds additional chlorophylls, carotenoids and specific lipids. serves as cofactor. In terms of processing, tyr-161 forms a radical intermediate that is referred to as redox-active TyrZ, YZ or Y-Z. Post-translationally, C-terminally processed by CTPA; processing is essential to allow assembly of the oxygen-evolving complex and thus photosynthetic growth.

The protein localises to the plastid. It is found in the chloroplast thylakoid membrane. The enzyme catalyses 2 a plastoquinone + 4 hnu + 2 H2O = 2 a plastoquinol + O2. Its function is as follows. Photosystem II (PSII) is a light-driven water:plastoquinone oxidoreductase that uses light energy to abstract electrons from H(2)O, generating O(2) and a proton gradient subsequently used for ATP formation. It consists of a core antenna complex that captures photons, and an electron transfer chain that converts photonic excitation into a charge separation. The D1/D2 (PsbA/PsbD) reaction center heterodimer binds P680, the primary electron donor of PSII as well as several subsequent electron acceptors. The protein is Photosystem II protein D1 of Cucumis sativus (Cucumber).